The primary structure comprises 287 residues: Bifunctional protein FolD (287 aa).

NADP(+)-binding positions include glycine 164–serine 166, serine 189, and isoleucine 230.

This sequence belongs to the tetrahydrofolate dehydrogenase/cyclohydrolase family. Homodimer.

The enzyme catalyses (6R)-5,10-methylene-5,6,7,8-tetrahydrofolate + NADP(+) = (6R)-5,10-methenyltetrahydrofolate + NADPH. The catalysed reaction is (6R)-5,10-methenyltetrahydrofolate + H2O = (6R)-10-formyltetrahydrofolate + H(+). It participates in one-carbon metabolism; tetrahydrofolate interconversion. Functionally, catalyzes the oxidation of 5,10-methylenetetrahydrofolate to 5,10-methenyltetrahydrofolate and then the hydrolysis of 5,10-methenyltetrahydrofolate to 10-formyltetrahydrofolate. The polypeptide is Bifunctional protein FolD (Aliarcobacter butzleri (strain RM4018) (Arcobacter butzleri)).